A 289-amino-acid chain; its full sequence is Acetyl-coenzyme A carboxylase carboxyl transferase subunit beta (289 aa).

The CoA carboxyltransferase N-terminal domain maps to 34 to 289 (MWVKCNKCGD…KLINMHQNSF (256 aa)). Positions 38, 41, 57, and 60 each coordinate Zn(2+). The segment at 38-60 (CNKCGDILYQNDLEKNYMVCNLC) adopts a C4-type zinc-finger fold.

Belongs to the AccD/PCCB family. Acetyl-CoA carboxylase is a heterohexamer composed of biotin carboxyl carrier protein (AccB), biotin carboxylase (AccC) and two subunits each of ACCase subunit alpha (AccA) and ACCase subunit beta (AccD). Requires Zn(2+) as cofactor.

The protein localises to the cytoplasm. The catalysed reaction is N(6)-carboxybiotinyl-L-lysyl-[protein] + acetyl-CoA = N(6)-biotinyl-L-lysyl-[protein] + malonyl-CoA. It functions in the pathway lipid metabolism; malonyl-CoA biosynthesis; malonyl-CoA from acetyl-CoA: step 1/1. Component of the acetyl coenzyme A carboxylase (ACC) complex. Biotin carboxylase (BC) catalyzes the carboxylation of biotin on its carrier protein (BCCP) and then the CO(2) group is transferred by the transcarboxylase to acetyl-CoA to form malonyl-CoA. This chain is Acetyl-coenzyme A carboxylase carboxyl transferase subunit beta, found in Clostridium botulinum (strain Langeland / NCTC 10281 / Type F).